The following is a 1578-amino-acid chain: BRD4-interacting chromatin-remodeling complex-associated protein (1578 aa).

3 disordered regions span residues Asp80 to Cys101, Pro631 to Ala673, and Ile725 to Arg951. Positions Ala86–Ala96 are enriched in gly residues. 2 stretches are compositionally biased toward low complexity: residues Pro631–Gln662 and Ile764–Pro782. Pro residues-rich tracts occupy residues Met793–Gln816, Pro824–Leu841, and Pro865–His888. The span at Leu889–Ala906 shows a compositional bias: low complexity. A Phosphoserine modification is found at Ser929. Phosphothreonine is present on Thr931. The span at Pro942–Arg951 shows a compositional bias: pro residues. Lys1067 carries the post-translational modification N6-acetyllysine. Residues Glu1206–Ala1316 form a disordered region. 2 stretches are compositionally biased toward low complexity: residues Ser1233–Ala1247 and Ala1275–Ser1294. Lys1327 is covalently cross-linked (Glycyl lysine isopeptide (Lys-Gly) (interchain with G-Cter in SUMO2)). Disordered stretches follow at residues Asp1342–Val1435 and Val1457–Arg1578. Residues Gln1346–Pro1370 show a composition bias toward pro residues. Ser1427 carries the phosphoserine modification. A compositionally biased stretch (polar residues) spans Ala1502–Pro1532. Positions Gly1538 to Pro1553 are enriched in pro residues.

As to quaternary structure, component of the multiprotein chromatin-remodeling complexes SWI/SNF: SWI/SNF-A (BAF), SWI/SNF-B (PBAF) and related complexes. The canonical complex contains a catalytic subunit (either SMARCA4/BRG1/BAF190A or SMARCA2/BRM/BAF190B) and at least SMARCE1, ACTL6A/BAF53, SMARCC1/BAF155, SMARCC2/BAF170, and SMARCB1/SNF5/BAF47. Other subunits specific to each of the complexes may also be present permitting several possible combinations developmentally and tissue specific. Component of the SWI/SNF (GBAF) subcomplex, which includes at least BICRA or BICRAL (mutually exclusive), BRD9, SS18, the core BAF subunits, SMARCA2/BRM, SMARCA4/BRG1/BAF190A, ACTL6A/BAF53, SMARCC1/BAF155, and SMARCD1/BAF60A. Interacts with BRD4; the interaction bridges BRD4 to the GBAF complex.

The protein resides in the nucleus. Its function is as follows. Component of SWI/SNF chromatin remodeling subcomplex GBAF that carries out key enzymatic activities, changing chromatin structure by altering DNA-histone contacts within a nucleosome in an ATP-dependent manner. May play a role in BRD4-mediated gene transcription. This is BRD4-interacting chromatin-remodeling complex-associated protein from Mus musculus (Mouse).